Here is a 562-residue protein sequence, read N- to C-terminus: Glycine betaine/proline/choline/ectoine transporter VP1456 (562 aa).

Transmembrane regions (helical) follow at residues 68–88, 110–130, 147–167, 203–223, 243–263, 287–307, 322–342, 373–393, 404–424, 456–476, 503–523, and 531–551; these read PVFG…LLVE, FFMW…FSPL, VSWL…FWSV, WGVH…FFAF, AWGW…LFGL, GIGT…LSVV, MIVA…TAMG, WTVF…MFIA, FLFA…SVFG, VLPY…VFFI, IFWA…GGKE, and GVVA…VSLV.

Belongs to the BCCT transporter (TC 2.A.15) family.

The protein resides in the cell inner membrane. In terms of biological role, involved in the uptake of osmoprotectants. Can transport glycine betaine, proline, choline and ectoine. This is Glycine betaine/proline/choline/ectoine transporter VP1456 from Vibrio parahaemolyticus serotype O3:K6 (strain RIMD 2210633).